We begin with the raw amino-acid sequence, 223 residues long: Uracil-DNA glycosylase (223 aa).

The active-site Proton acceptor is Asp67.

This sequence belongs to the uracil-DNA glycosylase (UDG) superfamily. UNG family.

The protein resides in the cytoplasm. It carries out the reaction Hydrolyzes single-stranded DNA or mismatched double-stranded DNA and polynucleotides, releasing free uracil.. In terms of biological role, excises uracil residues from the DNA which can arise as a result of misincorporation of dUMP residues by DNA polymerase or due to deamination of cytosine. This Borrelia turicatae (strain 91E135) protein is Uracil-DNA glycosylase.